We begin with the raw amino-acid sequence, 231 residues long: ATP-dependent dethiobiotin synthetase BioD 2 (231 aa).

13–18 (SVGKTV) is a binding site for ATP. Position 17 (Thr-17) interacts with Mg(2+). The active site involves Lys-38. Residues Asp-55, 112–115 (EGTG), 172–173 (NR), 201–203 (PYL), and Gln-208 each bind ATP. Positions 55 and 112 each coordinate Mg(2+).

It belongs to the dethiobiotin synthetase family. As to quaternary structure, homodimer. It depends on Mg(2+) as a cofactor.

Its subcellular location is the cytoplasm. It catalyses the reaction (7R,8S)-7,8-diammoniononanoate + CO2 + ATP = (4R,5S)-dethiobiotin + ADP + phosphate + 3 H(+). Its pathway is cofactor biosynthesis; biotin biosynthesis; biotin from 7,8-diaminononanoate: step 1/2. In terms of biological role, catalyzes a mechanistically unusual reaction, the ATP-dependent insertion of CO2 between the N7 and N8 nitrogen atoms of 7,8-diaminopelargonic acid (DAPA, also called 7,8-diammoniononanoate) to form a ureido ring. The chain is ATP-dependent dethiobiotin synthetase BioD 2 from Escherichia coli O157:H7.